The following is a 437-amino-acid chain: tRNA-2-methylthio-N(6)-dimethylallyladenosine synthase (437 aa).

The region spanning 1–115 is the MTTase N-terminal domain; it reads MKVYIETMGC…ISQVIHKEKA (115 aa). [4Fe-4S] cluster-binding residues include Cys10, Cys46, Cys78, Cys148, Cys152, and Cys155. One can recognise a Radical SAM core domain in the interval 134 to 367; sequence KKAQIRSLLN…QNRHKEILEE (234 aa). One can recognise a TRAM domain in the interval 370–436; the sequence is KLEVGKTHVV…KGRLIATAKG (67 aa).

It belongs to the methylthiotransferase family. MiaB subfamily. As to quaternary structure, monomer. Requires [4Fe-4S] cluster as cofactor.

It is found in the cytoplasm. The enzyme catalyses N(6)-dimethylallyladenosine(37) in tRNA + (sulfur carrier)-SH + AH2 + 2 S-adenosyl-L-methionine = 2-methylsulfanyl-N(6)-dimethylallyladenosine(37) in tRNA + (sulfur carrier)-H + 5'-deoxyadenosine + L-methionine + A + S-adenosyl-L-homocysteine + 2 H(+). Functionally, catalyzes the methylthiolation of N6-(dimethylallyl)adenosine (i(6)A), leading to the formation of 2-methylthio-N6-(dimethylallyl)adenosine (ms(2)i(6)A) at position 37 in tRNAs that read codons beginning with uridine. In Helicobacter pylori (strain Shi470), this protein is tRNA-2-methylthio-N(6)-dimethylallyladenosine synthase.